The chain runs to 507 residues: Solute carrier family 2, facilitated glucose transporter member 6 (507 aa).

A disordered region spans residues methionine 1–alanine 28. Residues methionine 1–arginine 37 lie on the Cytoplasmic side of the membrane. Positions leucine 5–leucine 6 match the Dileucine internalization motif motif. Serine 23 carries the post-translational modification Phosphoserine. Residues valine 38–tyrosine 58 form a helical membrane-spanning segment. Residues threonine 59–alanine 81 lie on the Extracellular side of the membrane. Residues serine 82–leucine 102 form a helical membrane-spanning segment. Over asparagine 103–serine 111 the chain is Cytoplasmic. A helical transmembrane segment spans residues isoleucine 112–leucine 132. Topologically, residues tryptophan 133–threonine 140 are extracellular. The helical transmembrane segment at leucine 141 to alanine 161 threads the bilayer. The Cytoplasmic segment spans residues proline 162–alanine 168. Residues leucine 169–leucine 189 form a helical membrane-spanning segment. Residue glutamine 174 coordinates a D-hexose. At leucine 190–arginine 194 the chain is on the extracellular side. A helical membrane pass occupies residues tryptophan 195 to proline 215. Residues asparagine 216–threonine 289 lie on the Cytoplasmic side of the membrane. An a D-hexose-binding site is contributed by glutamine 286–glutamine 287. Residues glycine 290–proline 310 form a helical membrane-spanning segment. Residues proline 311–aspartate 314 are Extracellular-facing. Residues alanine 315–leucine 335 traverse the membrane as a helical segment. Residues alanine 336–lysine 339 are Cytoplasmic-facing. A helical membrane pass occupies residues valine 340–isoleucine 360. Residues histidine 361 to threonine 395 are Extracellular-facing. Residue asparagine 370 is glycosylated (N-linked (GlcNAc...) asparagine). The helical transmembrane segment at leucine 396–isoleucine 416 threads the bilayer. Topologically, residues threonine 417 to glycine 435 are cytoplasmic. Tryptophan 418 contacts a D-hexose. Residues leucine 436–valine 456 form a helical membrane-spanning segment. The Extracellular segment spans residues serine 457–glutamine 462. Residues valine 463–valine 483 traverse the membrane as a helical segment. Topologically, residues proline 484 to arginine 507 are cytoplasmic.

It belongs to the major facilitator superfamily. Sugar transporter (TC 2.A.1.1) family. Glucose transporter subfamily. As to expression, highly expressed in brain, spleen and peripheral blood leukocytes.

The protein localises to the lysosome membrane. Functionally, probable sugar transporter that acts as a regulator of glycolysis in macrophages. Does not transport glucose. The polypeptide is Solute carrier family 2, facilitated glucose transporter member 6 (Homo sapiens (Human)).